Reading from the N-terminus, the 104-residue chain is NADH-quinone oxidoreductase subunit K (104 aa).

The next 3 membrane-spanning stretches (helical) occupy residues 7 to 27, 33 to 53, and 67 to 87; these read LSHY…GIFL, IVIL…LVSF, and LLVL…LVVF.

Belongs to the complex I subunit 4L family. In terms of assembly, NDH-1 is composed of 14 different subunits. Subunits NuoA, H, J, K, L, M, N constitute the membrane sector of the complex.

It is found in the cell inner membrane. It carries out the reaction a quinone + NADH + 5 H(+)(in) = a quinol + NAD(+) + 4 H(+)(out). In terms of biological role, NDH-1 shuttles electrons from NADH, via FMN and iron-sulfur (Fe-S) centers, to quinones in the respiratory chain. The immediate electron acceptor for the enzyme in this species is believed to be ubiquinone. Couples the redox reaction to proton translocation (for every two electrons transferred, four hydrogen ions are translocated across the cytoplasmic membrane), and thus conserves the redox energy in a proton gradient. The chain is NADH-quinone oxidoreductase subunit K from Xanthobacter autotrophicus (strain ATCC BAA-1158 / Py2).